The chain runs to 609 residues: UvrABC system protein C (609 aa).

The GIY-YIG domain occupies Ala19–Val97. The 36-residue stretch at Glu208–Phe243 folds into the UVR domain.

It belongs to the UvrC family. Interacts with UvrB in an incision complex.

The protein resides in the cytoplasm. Functionally, the UvrABC repair system catalyzes the recognition and processing of DNA lesions. UvrC both incises the 5' and 3' sides of the lesion. The N-terminal half is responsible for the 3' incision and the C-terminal half is responsible for the 5' incision. The polypeptide is UvrABC system protein C (Leptospira interrogans serogroup Icterohaemorrhagiae serovar copenhageni (strain Fiocruz L1-130)).